A 465-amino-acid chain; its full sequence is SET domain-containing protein 3 (465 aa).

Residues 18–265 enclose the SET domain; that stretch reads DKVTVKWDKK…AREELLDSYG (248 aa).

Belongs to the class V-like SAM-binding methyltransferase superfamily.

The protein is SET domain-containing protein 3 (set-3) of Caenorhabditis elegans.